The primary structure comprises 251 residues: Imidazole glycerol phosphate synthase subunit HisF (251 aa).

Active-site residues include D11 and D130.

The protein belongs to the HisA/HisF family. Heterodimer of HisH and HisF.

It is found in the cytoplasm. It carries out the reaction 5-[(5-phospho-1-deoxy-D-ribulos-1-ylimino)methylamino]-1-(5-phospho-beta-D-ribosyl)imidazole-4-carboxamide + L-glutamine = D-erythro-1-(imidazol-4-yl)glycerol 3-phosphate + 5-amino-1-(5-phospho-beta-D-ribosyl)imidazole-4-carboxamide + L-glutamate + H(+). It functions in the pathway amino-acid biosynthesis; L-histidine biosynthesis; L-histidine from 5-phospho-alpha-D-ribose 1-diphosphate: step 5/9. In terms of biological role, IGPS catalyzes the conversion of PRFAR and glutamine to IGP, AICAR and glutamate. The HisF subunit catalyzes the cyclization activity that produces IGP and AICAR from PRFAR using the ammonia provided by the HisH subunit. This chain is Imidazole glycerol phosphate synthase subunit HisF, found in Listeria monocytogenes serotype 4b (strain CLIP80459).